A 1227-amino-acid chain; its full sequence is Protein U7 (1227 aa).

This sequence belongs to the herpesviridae US22 family.

The polypeptide is Protein U7 (U7/U5) (Homo sapiens (Human)).